Here is a 127-residue protein sequence, read N- to C-terminus: Fluoride-specific ion channel FluC (127 aa).

4 helical membrane passes run 7-27, 31-51, 68-88, and 97-117; these read LLVA…GAWV, LGAG…FLIG, LFLA…SYET, and VGKA…LAFL. Residues glycine 76 and threonine 79 each coordinate Na(+).

It belongs to the fluoride channel Fluc/FEX (TC 1.A.43) family.

It localises to the cell inner membrane. The catalysed reaction is fluoride(in) = fluoride(out). With respect to regulation, na(+) is not transported, but it plays an essential structural role and its presence is essential for fluoride channel function. Fluoride-specific ion channel. Important for reducing fluoride concentration in the cell, thus reducing its toxicity. This chain is Fluoride-specific ion channel FluC, found in Thermus thermophilus (strain ATCC BAA-163 / DSM 7039 / HB27).